The primary structure comprises 312 residues: Olfactory receptor 1D5 (312 aa).

At M1 to Q25 the chain is on the extracellular side. The N-linked (GlcNAc...) asparagine glycan is linked to N5. Residues I26–I49 traverse the membrane as a helical segment. Residues S50–T57 are Cytoplasmic-facing. The chain crosses the membrane as a helical span at residues P58–P79. The Extracellular segment spans residues K80 to Q100. A disulfide bond links C97 and C189. The chain crosses the membrane as a helical span at residues L101–Y120. Over D121–L140 the chain is Cytoplasmic. A helical transmembrane segment spans residues C141 to L158. Residues L159–H196 lie on the Extracellular side of the membrane. Residues T197–C220 traverse the membrane as a helical segment. At I221 to A237 the chain is on the cytoplasmic side. A helical transmembrane segment spans residues F238–L260. Residues Q261–S271 lie on the Extracellular side of the membrane. A helical transmembrane segment spans residues V272 to L291. The Cytoplasmic portion of the chain corresponds to R292–K312.

Belongs to the G-protein coupled receptor 1 family.

Its subcellular location is the cell membrane. Odorant receptor. The protein is Olfactory receptor 1D5 (OR1D5) of Pan paniscus (Pygmy chimpanzee).